A 1577-amino-acid polypeptide reads, in one-letter code: Dynamin-binding protein (1577 aa).

An N-acetylmethionine modification is found at Met-1. 3 consecutive SH3 domains span residues 2–61 (EPGS…IVTI), 66–126 (EGER…ELCL), and 145–204 (YSMG…LLGP). The segment at 209 to 242 (DESVNAGSGDDSTLNDEVDVSPEEVESEGDEDDQ) is disordered. Residues 221–242 (TLNDEVDVSPEEVESEGDEDDQ) are compositionally biased toward acidic residues. One can recognise an SH3 4 domain in the interval 243 to 302 (QAGTYGIALYRFQALESNELDFEVGDKIRILGTLEDGWLEGRLKGKTGIFPHRFVKLCPS). 2 disordered regions span residues 307 to 361 (ETMA…EEPL) and 375 to 437 (GQDE…SRQC). The segment covering 400-410 (PDLSQEVNGIS) has biased composition (polar residues). Residue Ser-494 is modified to Phosphoserine. Disordered regions lie at residues 519–547 (PERPKRRPGLPDKEPATEITPASQGDNLD) and 590–681 (RGSS…SEYT). Residues 617–626 (TPTSTSPHLL) are compositionally biased toward low complexity. The segment covering 632–651 (KPGPPLVVRPSRPAPLPPPT) has biased composition (pro residues). Polar residues predominate over residues 652–662 (QQRLNTASPKP). Residues 672 to 681 (APEKEGSEYT) are compositionally biased toward basic and acidic residues. Ser-684 carries the post-translational modification Phosphoserine. Residues 705–755 (LDMHTRAQEELNLLLEEKQDESLRAETLETLKSYESTIQSLNLELQQLREM) adopt a coiled-coil conformation. The DH domain maps to 784-967 (KRAKVVAELL…KEINANINEY (184 aa)). Residues 1008 to 1217 (LKHLTGFAPQ…LKASDREGNL (210 aa)) enclose the BAR domain. Residues 1285–1348 (PPEKLFHVQR…YSSFLKPYNP (64 aa)) form the SH3 5 domain. Residues 1353-1375 (SDSSVVSHSSTESEHSGSSPSFH) are compositionally biased toward low complexity. Disordered stretches follow at residues 1353-1381 (SDSSVVSHSSTESEHSGSSPSFHRQNSSS) and 1415-1510 (ETLG…LGSS). Polar residues-rich tracts occupy residues 1418 to 1428 (GVSSNTGNPET) and 1484 to 1497 (DQGSDSIKGTSRAC). In terms of domain architecture, SH3 6 spans 1513–1576 (EGNQVYFAIY…PSNYIRKTEY (64 aa)).

Binds DNM1 via its N-terminal SH3 domains. The C-terminal SH3 domain binds a complex containing actin, tubulin, Hsp70 and actin-regulatory proteins, such as ENAH, EVL, WIRE, CR16, WAVE1 and NAP1L1. Interacts with FASLG. Interacts (via SH3 domain 6) with WASL. Interacts (via SH3 domain 6) interacts with ENAH. Interacts (via C-terminal domain) with TJP1; required for the apical cell-cell junction localization of DNMBP. Widely expressed.

The protein resides in the cytoplasm. It localises to the golgi apparatus. Its subcellular location is the golgi stack. It is found in the cytoskeleton. The protein localises to the synapse. The protein resides in the cell junction. Functionally, plays a critical role as a guanine nucleotide exchange factor (GEF) for CDC42 in several intracellular processes associated with the actin and microtubule cytoskeleton. Regulates the structure of apical junctions in epithelial cells. Participates in the normal lumenogenesis of epithelial cell cysts by regulating spindle orientation. Plays a role in ciliogenesis. May play a role in membrane trafficking between the cell surface and the Golgi. This is Dynamin-binding protein from Rattus norvegicus (Rat).